The chain runs to 141 residues: Hemoglobin subunit alpha-A (141 aa).

Residues 1-141 enclose the Globin domain; it reads VLSSGDKANV…VSTVLTSKYR (141 aa). Residue His58 participates in O2 binding. His87 serves as a coordination point for heme b.

Belongs to the globin family. As to quaternary structure, heterotetramer of two alpha chains and two beta chains. In terms of tissue distribution, red blood cells.

In terms of biological role, involved in oxygen transport from the lung to the various peripheral tissues. The sequence is that of Hemoglobin subunit alpha-A (HBAA) from Caretta caretta (Loggerhead sea turtle).